Consider the following 325-residue polypeptide: MTTPFVLAVPSKGRLQENAEAFFARAGLTLSKLGGARDYRGTIAGLDNVEIAYLSASEIAAQLARGTVHLGITGEDLIRESIADADKKVALIEGLGFGGANVVVAVPQAWIDVRTMADLDDVTTGFRAQHNRRMRVATKYINLTRNFFAAHGVVDYRIVESAGATEGAPAVGTAEMIVDITSSGATLVANGLKVLDDGVILRSQANLVASRAADWSADALETARVILDRIAARARANKYKEVRTRFAGCDASLLTEAHNRFGVVSPFGGPTSSGMITLHCPPAQLYALGSFLRDHGADTVSIASLDYVLDRENPLFAKLESFLRQ.

This sequence belongs to the ATP phosphoribosyltransferase family. Long subfamily. Mg(2+) serves as cofactor.

Its subcellular location is the cytoplasm. It catalyses the reaction 1-(5-phospho-beta-D-ribosyl)-ATP + diphosphate = 5-phospho-alpha-D-ribose 1-diphosphate + ATP. It functions in the pathway amino-acid biosynthesis; L-histidine biosynthesis; L-histidine from 5-phospho-alpha-D-ribose 1-diphosphate: step 1/9. Its activity is regulated as follows. Feedback inhibited by histidine. Functionally, catalyzes the condensation of ATP and 5-phosphoribose 1-diphosphate to form N'-(5'-phosphoribosyl)-ATP (PR-ATP). Has a crucial role in the pathway because the rate of histidine biosynthesis seems to be controlled primarily by regulation of HisG enzymatic activity. The sequence is that of ATP phosphoribosyltransferase from Rhodopseudomonas palustris (strain BisB18).